The following is a 466-amino-acid chain: MSNGNIVQCIGPVVDIQFPRDKMPNIYDALTLVESGEKSFAEKGLTFEVQQQIGDGVVRAIAMGASDGLRRGMEVKSTGKPISVPVGPATLGRIMDVLGRPIDDAGPIATEERRAIHQPAPKFDELSPSVDLLETGIKVIDLVCPFAKGGKVGLFGGAGVGKTVNMMELINNIAKQHSGLSVFAGVGERTREGNDFYHEMKESNVIDKVAMVFGQMNEPPGNRLRVALTGLTMAEAFRDEGRDILFFVDNIYRYTLAGTEVSALLGRMPSAVGYQPTLAEEMGKLQERITSTKTGSVTSIQAVYVPADDLTDPSPATTFLHLDSTVVLSRDIAALGIYPAVDPLDSTSRQLDPQVVGQEHYEVARDVQMTLQRYKELRDIIAILGMDELSPEDKLAVSRARKIQRFLSQPFHVAEVFTGSPGKYVPLKETIRGFKMICSGELDHLPEQAFYMVGSIDEAIEKAKKL.

ATP is bound at residue 156–163; sequence GGAGVGKT.

This sequence belongs to the ATPase alpha/beta chains family. In terms of assembly, F-type ATPases have 2 components, CF(1) - the catalytic core - and CF(0) - the membrane proton channel. CF(1) has five subunits: alpha(3), beta(3), gamma(1), delta(1), epsilon(1). CF(0) has three main subunits: a(1), b(2) and c(9-12). The alpha and beta chains form an alternating ring which encloses part of the gamma chain. CF(1) is attached to CF(0) by a central stalk formed by the gamma and epsilon chains, while a peripheral stalk is formed by the delta and b chains.

The protein resides in the cell membrane. It carries out the reaction ATP + H2O + 4 H(+)(in) = ADP + phosphate + 5 H(+)(out). In terms of biological role, produces ATP from ADP in the presence of a proton gradient across the membrane. The catalytic sites are hosted primarily by the beta subunits. This is ATP synthase subunit beta from Polynucleobacter asymbioticus (strain DSM 18221 / CIP 109841 / QLW-P1DMWA-1) (Polynucleobacter necessarius subsp. asymbioticus).